The following is a 32-amino-acid chain: Fimbrin sef21 (32 aa).

It is found in the fimbrium. This is Fimbrin sef21 from Salmonella enteritidis.